Consider the following 141-residue polypeptide: Metallothiol transferase FosB (141 aa).

In terms of domain architecture, VOC spans Ser-5–Gly-120. Mg(2+) contacts are provided by His-8, His-67, and Glu-116. The active-site Proton donor/acceptor is the Glu-116.

The protein belongs to the fosfomycin resistance protein family. FosB subfamily. As to quaternary structure, homodimer. Requires Mg(2+) as cofactor.

It is found in the cytoplasm. Metallothiol transferase which confers resistance to fosfomycin by catalyzing the addition of a thiol cofactor to fosfomycin. L-cysteine is probably the physiological thiol donor. This Lysinibacillus sphaericus (strain C3-41) protein is Metallothiol transferase FosB.